A 553-amino-acid polypeptide reads, in one-letter code: Zinc finger CCHC domain-containing protein 8 homolog (553 aa).

Position 59 is a phosphoserine (S59). The segment at 183-200 (SSCFNCGDTEHSLRDCTK) adopts a CCHC-type zinc-finger fold. A phosphoserine mark is found at S292 and S347. Y356 is subject to Phosphotyrosine. The disordered stretch occupies residues 388-492 (LEEETEDPPL…APSTPFKASY (105 aa)). A compositionally biased stretch (pro residues) spans 395 to 409 (PPLPPSVPPPQPPPP). 2 positions are modified to phosphoserine: S421 and S423. Polar residues-rich tracts occupy residues 444–456 (ASHNTTANESKSP) and 473–485 (ESGNNEQSRSAPS).

It belongs to the ZCCHC8 family.

The protein localises to the nucleus. Its subcellular location is the nucleoplasm. Scaffolding subunit of the trimeric nuclear exosome targeting (NEXT) complex, a complex that directs a subset of non-coding short-lived RNAs for exosomal degradation. The RNA exosome is fundamental for the degradation of RNA in eukaryotic nuclei. May be involved in pre-mRNA splicing. The sequence is that of Zinc finger CCHC domain-containing protein 8 homolog from Drosophila melanogaster (Fruit fly).